The chain runs to 221 residues: Casparian strip membrane protein 3 (221 aa).

Residues 1–12 show a composition bias toward basic and acidic residues; the sequence is MDIEKAGSRREE. Positions 1–27 are disordered; the sequence is MDIEKAGSRREEEEPIVQRPKLDKGKG. Residues 1–58 lie on the Cytoplasmic side of the membrane; it reads MDIEKAGSRREEEEPIVQRPKLDKGKGKAHVFAPPMNYNRIMDKHKQEKMSPAGWKRG. A helical membrane pass occupies residues 59–79; the sequence is VAIFDFVLRLIAAITAMAAAA. The Extracellular segment spans residues 80–109; that stretch reads KMATTEETLPFFTQFLQFQADYTDLPTMSS. The helical transmembrane segment at 110–130 threads the bilayer; the sequence is FVIVNSIVGGYLTLSLPFSIV. The Cytoplasmic portion of the chain corresponds to 131–148; the sequence is CILRPLAVPPRLFLILCD. A helical transmembrane segment spans residues 149–169; the sequence is TVMMGLTLMAASASAAIVYLA. The Extracellular segment spans residues 170–194; sequence HNGNSSSNWLPVCQQFGDFCQGTSG. Asn173 carries N-linked (GlcNAc...) asparagine glycosylation. A helical membrane pass occupies residues 195–215; the sequence is AVVASFIAATLLMFLVILSAF. At 216 to 221 the chain is on the cytoplasmic side; it reads ALKRTT.

The protein belongs to the Casparian strip membrane proteins (CASP) family. Homodimer and heterodimers with other CASP proteins. Interacts with CASP1, CASP2, CASP4 and CASP5.

The protein localises to the cell membrane. In terms of biological role, regulates membrane-cell wall junctions and localized cell wall deposition. Required for establishment of the Casparian strip membrane domain (CSD) and the subsequent formation of Casparian strips, a cell wall modification of the root endodermis that determines an apoplastic barrier between the intraorganismal apoplasm and the extraorganismal apoplasm and prevents lateral diffusion. In Arabidopsis thaliana (Mouse-ear cress), this protein is Casparian strip membrane protein 3 (CASP3).